The chain runs to 472 residues: Ribosomal protein uS12 methylthiotransferase RimO (472 aa).

Residues 33–143 (NRIGFVSLGC…VLKHVHKYVP (111 aa)) form the MTTase N-terminal domain. Residues Cys42, Cys78, Cys107, Cys175, Cys179, and Cys182 each contribute to the [4Fe-4S] cluster site. One can recognise a Radical SAM core domain in the interval 161–398 (LTPKHYAYLK…MELQAEISAE (238 aa)). The 67-residue stretch at 401-467 (ARFVGRTLDI…EHDLWAEVVD (67 aa)) folds into the TRAM domain.

The protein belongs to the methylthiotransferase family. RimO subfamily. Requires [4Fe-4S] cluster as cofactor.

The protein resides in the cytoplasm. The catalysed reaction is L-aspartate(89)-[ribosomal protein uS12]-hydrogen + (sulfur carrier)-SH + AH2 + 2 S-adenosyl-L-methionine = 3-methylsulfanyl-L-aspartate(89)-[ribosomal protein uS12]-hydrogen + (sulfur carrier)-H + 5'-deoxyadenosine + L-methionine + A + S-adenosyl-L-homocysteine + 2 H(+). Catalyzes the methylthiolation of an aspartic acid residue of ribosomal protein uS12. This is Ribosomal protein uS12 methylthiotransferase RimO from Shewanella putrefaciens (strain CN-32 / ATCC BAA-453).